Reading from the N-terminus, the 185-residue chain is Potassium-transporting ATPase KdpC subunit (185 aa).

The chain crosses the membrane as a helical span at residues 14–34; the sequence is ALSLLTGVAYPLALTGIAAVI. The segment at 105 to 128 is disordered; sequence AQNGAPAPVDAVTASGSGLDPHVS.

It belongs to the KdpC family. As to quaternary structure, the system is composed of three essential subunits: KdpA, KdpB and KdpC.

Its subcellular location is the cell inner membrane. In terms of biological role, part of the high-affinity ATP-driven potassium transport (or Kdp) system, which catalyzes the hydrolysis of ATP coupled with the electrogenic transport of potassium into the cytoplasm. This subunit acts as a catalytic chaperone that increases the ATP-binding affinity of the ATP-hydrolyzing subunit KdpB by the formation of a transient KdpB/KdpC/ATP ternary complex. The chain is Potassium-transporting ATPase KdpC subunit from Cereibacter sphaeroides (strain ATCC 17029 / ATH 2.4.9) (Rhodobacter sphaeroides).